Consider the following 114-residue polypeptide: MTSFAQLDIKSEELAIVKTILQQLVPDYTVWAFGSRVKGKAKKYSDLDLAIISEEPLDFLARDRLKEAFSESDLPWRVDLLDWATTSEDFREIIRKVYVVIQEKEKTVEKPTAL.

A GSX(10)DXD motif motif is present at residues 34–48 (GSRVKGKAKKYSDLD). Catalysis depends on residues Asp-46 and Asp-48. Mg(2+) is bound by residues Asp-46, Asp-48, Glu-67, Glu-71, and Asp-79.

The protein belongs to the MntA antitoxin family. Forms a complex with HepT, probably with a stoichiometry of 2:2. Requires Mg(2+) as cofactor.

The enzyme catalyses L-tyrosyl-[protein] + ATP = O-(5'-adenylyl)-L-tyrosyl-[protein] + diphosphate. It catalyses the reaction O-(5'-adenylyl)-L-tyrosyl-[protein] + ATP = O-[5'-(adenylyl-(5'-&gt;3')-adenylyl)]-L-tyrosyl-[protein] + diphosphate. Functionally, probable antitoxin component of a type VII toxin-antitoxin (TA) system. Neutralizes cognate toxic HEPN probably by di-AMPylation. A mixture of HepT and MntA binds nucleotides; the highest affinity is for TTP, ATP binds more tightly than ADP or AMP. The sequence is that of Probable protein adenylyltransferase MntA (mntA) from Haemophilus influenzae (strain ATCC 51907 / DSM 11121 / KW20 / Rd).